A 238-amino-acid polypeptide reads, in one-letter code: Cysteine-rich venom protein pseudechetoxin-like (238 aa).

The signal sequence occupies residues 1–19; the sequence is MIAFLVLLSLAAVLQQSSG. A propeptide spanning residues 20-28 is cleaved from the precursor; that stretch reads TVDFASESS. An SCP domain is found at 38–164; sequence VDKHNDLRRS…STKYLYVCQY (127 aa). Disulfide bonds link Cys-75–Cys-153, Cys-92–Cys-165, Cys-148–Cys-162, Cys-184–Cys-191, Cys-187–Cys-196, Cys-200–Cys-233, Cys-209–Cys-227, and Cys-218–Cys-231. Positions 200-233 constitute a ShKT domain; the sequence is CKHNDDLSNCKTLVKKHKCQTEWIKSKCPATCFC.

This sequence belongs to the CRISP family. Expressed by the venom gland.

The protein resides in the secreted. Blocks olfactory (CNGA2) and retinal (CNGA1) CNG channel currents. Does not affect neither depolarization- nor caffeine-induced contraction of smooth muscle. In Pseudonaja textilis (Eastern brown snake), this protein is Cysteine-rich venom protein pseudechetoxin-like.